The chain runs to 495 residues: Type-1 histone deacetylase 1 (495 aa).

D94 lines the substrate pocket. H136 acts as the Proton acceptor in catalysis. G144 contacts substrate. The a divalent metal cation site is built by D171, H173, and D259. Residue Y298 participates in substrate binding. The interval 372–495 is disordered; the sequence is PAAAHHDIPP…EDADVDMDSG (124 aa). Basic and acidic residues predominate over residues 396 to 413; sequence DVRISEADRDKKVHHQGE. A compositionally biased stretch (polar residues) spans 425 to 443; the sequence is NYSNGLEATSTSRRNQVSI. Residues 454-480 are compositionally biased toward low complexity; sequence NSRNNNNNNNNNNNNNNNNNNNSNNNN.

Belongs to the histone deacetylase family. HD type 1 subfamily.

Its subcellular location is the nucleus. It localises to the cytoplasm. The catalysed reaction is N(6)-acetyl-L-lysyl-[histone] + H2O = L-lysyl-[histone] + acetate. Its function is as follows. Responsible for the deacetylation of lysine residues on the N-terminal part of the core histones (H2A, H2B, H3 and H4). Histone deacetylation plays an important role in transcriptional regulation, cell cycle progression and developmental events. Histone deacetylases act via the formation of large multiprotein complexes. This is Type-1 histone deacetylase 1 (hdaA) from Dictyostelium discoideum (Social amoeba).